We begin with the raw amino-acid sequence, 161 residues long: Lipid droplet assembly factor 1 (161 aa).

Over 1–43 (MAKEEPQSISRDLQELQKKLSLLIDSFQNNSKVVAFMKSPVGQ) the chain is Cytoplasmic. Residues 44 to 61 (YLDSHPFLAFTLLVFIVM) traverse the membrane as a helical segment. The Lumenal portion of the chain corresponds to 62-67 (SAVPVG). Residues 68-87 (FFLLIVVLTTLAALLGVIIL) form a helical membrane-spanning segment. The Cytoplasmic segment spans residues 88–93 (EGLVIS). A helical transmembrane segment spans residues 94-110 (VGGFSLLCILCGLGFVS). At 111–116 (LAMSGM) the chain is on the lumenal side. Residues 117-133 (MIASYVVVSSLISCWFS) form a helical membrane-spanning segment. At 134 to 161 (PRPLTQQNTSCDFLPAMKSAEFEGLYQE) the chain is on the cytoplasmic side.

Belongs to the LDAF1 family. Interacts with isoform 1 and isoform 3 of BSCL2/seipin to form an oligomeric complex. As to expression, expressed at high levels in the heart and skeletal muscle. Expressed at low levels in kidney, small intestine, lung and liver.

Its subcellular location is the endoplasmic reticulum membrane. The protein localises to the lipid droplet. Plays an important role in the formation of lipid droplets (LD) which are storage organelles at the center of lipid and energy homeostasis. In association with BSCL2/seipin, defines the sites of LD formation in the endoplasmic reticulum. This is Lipid droplet assembly factor 1 from Homo sapiens (Human).